Consider the following 170-residue polypeptide: Peptide deformylase (170 aa).

2 residues coordinate Fe cation: C92 and H134. Residue E135 is part of the active site. Residue H138 coordinates Fe cation.

The protein belongs to the polypeptide deformylase family. Fe(2+) serves as cofactor.

The catalysed reaction is N-terminal N-formyl-L-methionyl-[peptide] + H2O = N-terminal L-methionyl-[peptide] + formate. Its function is as follows. Removes the formyl group from the N-terminal Met of newly synthesized proteins. Requires at least a dipeptide for an efficient rate of reaction. N-terminal L-methionine is a prerequisite for activity but the enzyme has broad specificity at other positions. The chain is Peptide deformylase from Chromohalobacter salexigens (strain ATCC BAA-138 / DSM 3043 / CIP 106854 / NCIMB 13768 / 1H11).